The chain runs to 178 residues: Caveolin-1 (178 aa).

Ser-2 carries the N-acetylserine modification. Ser-2 carries the post-translational modification Phosphoserine. Residues 2 to 94 form a required for homooligomerization region; that stretch reads SGGKYIDSEG…WKASFTTFTV (93 aa). Topologically, residues 2–104 are cytoplasmic; that stretch reads SGGKYIDSEG…TKYWFYRLLS (103 aa). Residue Lys-5 is modified to N6-acetyllysine; alternate. Residue Lys-5 forms a Glycyl lysine isopeptide (Lys-Gly) (interchain with G-Cter in ubiquitin); alternate linkage. Tyr-6 carries the phosphotyrosine modification. Residue Ser-9 is modified to Phosphoserine. Position 14 is a phosphotyrosine; by ABL1 (Tyr-14). Tyr-25 carries the post-translational modification Phosphotyrosine. Residues Lys-26, Lys-30, Lys-39, Lys-47, and Lys-57 each participate in a glycyl lysine isopeptide (Lys-Gly) (interchain with G-Cter in ubiquitin) cross-link. Residues 82–94 form an interaction with CAVIN3 region; sequence DGIWKASFTTFTV. The segment at residues 105–125 is an intramembrane region (helical); it reads ALFGIPMALIWGIYFAILSFL. The Cytoplasmic portion of the chain corresponds to 126 to 178; sequence HIWAVVPCIRSYLIEIQCISRIYSICIHTFCDPLFEAIGKIFSNVRIALQKEI. An interacts with SPRY1, SPRY2, SPRY3 and SPRY4 region spans residues 131–142; sequence VPCIRSYLIEIQ. S-palmitoyl cysteine attachment occurs at residues Cys-133, Cys-143, and Cys-156. The segment at 149-160 is interacts with SPRY1, SPRY2, and SPRY4; sequence SICIHTFCDPLF. Residues 167–178 form an interacts with SPRY1, SPRY2, SPRY3 and SPRY4 region; it reads FSNVRIALQKEI.

The protein belongs to the caveolin family. As to quaternary structure, homooligomer. Interacts with GLIPR2. Interacts with NOSTRIN. Interacts with SNAP25 and STX1A. Interacts (via the N-terminus) with DPP4; the interaction is direct. Interacts with CTNNB1, CDH1 and JUP. Interacts with PACSIN2; this interaction induces membrane tubulation. Interacts with SLC7A9. Interacts with BMX and BTK. Interacts with TGFBR1. Interacts with CAVIN3 (via leucine-zipper domain) in a cholesterol-sensitive manner. Interacts with CAVIN1. Interacts with EHD2 in a cholesterol-dependent manner. Forms a ternary complex with UBXN6 and VCP; mediates CAV1 targeting to lysosomes for degradation. Interacts with ABCG1; this interaction regulates ABCG1-mediated cholesterol efflux. Interacts with NEU3; this interaction enhances NEU3 sialidase activity within caveola. Interacts (via C-terminus) with SPRY1, SPRY2 (via C-terminus), SPRY3, and SPRY4. Interacts with IGFBP5; this interaction allows trafficking of IGFBP5 from the plasma membrane to the nucleus. In terms of processing, phosphorylated at Tyr-14 by ABL1 in response to oxidative stress. Ubiquitinated. Undergo monoubiquitination and multi- and/or polyubiquitination. Monoubiquitination of N-terminal lysines promotes integration in a ternary complex with UBXN6 and VCP which promotes oligomeric CAV1 targeting to lysosomes for degradation. Ubiquitinated by ZNRF1; leading to degradation and modulation of the TLR4-mediated immune response.

Its subcellular location is the golgi apparatus membrane. It is found in the cell membrane. The protein resides in the membrane. The protein localises to the caveola. It localises to the membrane raft. May act as a scaffolding protein within caveolar membranes. Forms a stable heterooligomeric complex with CAV2 that targets to lipid rafts and drives caveolae formation. Mediates the recruitment of CAVIN proteins (CAVIN1/2/3/4) to the caveolae. Interacts directly with G-protein alpha subunits and can functionally regulate their activity. Involved in the costimulatory signal essential for T-cell receptor (TCR)-mediated T-cell activation. Its binding to DPP4 induces T-cell proliferation and NF-kappa-B activation in a T-cell receptor/CD3-dependent manner. Recruits CTNNB1 to caveolar membranes and may regulate CTNNB1-mediated signaling through the Wnt pathway. Negatively regulates TGFB1-mediated activation of SMAD2/3 by mediating the internalization of TGFBR1 from membrane rafts leading to its subsequent degradation. Binds 20(S)-hydroxycholesterol (20(S)-OHC). In Didelphis virginiana (North American opossum), this protein is Caveolin-1 (CAV1).